A 354-amino-acid polypeptide reads, in one-letter code: Uroporphyrinogen decarboxylase (354 aa).

Substrate-binding positions include 25–29 (RQAGR), aspartate 75, tyrosine 152, threonine 207, and histidine 330.

This sequence belongs to the uroporphyrinogen decarboxylase family. In terms of assembly, homodimer.

It is found in the cytoplasm. It catalyses the reaction uroporphyrinogen III + 4 H(+) = coproporphyrinogen III + 4 CO2. The protein operates within porphyrin-containing compound metabolism; protoporphyrin-IX biosynthesis; coproporphyrinogen-III from 5-aminolevulinate: step 4/4. Its function is as follows. Catalyzes the decarboxylation of four acetate groups of uroporphyrinogen-III to yield coproporphyrinogen-III. This chain is Uroporphyrinogen decarboxylase, found in Xanthomonas campestris pv. campestris (strain 8004).